A 395-amino-acid polypeptide reads, in one-letter code: uncharacterized protein (395 aa).

This is an uncharacterized protein from Methanocaldococcus jannaschii (strain ATCC 43067 / DSM 2661 / JAL-1 / JCM 10045 / NBRC 100440) (Methanococcus jannaschii).